Reading from the N-terminus, the 299-residue chain is Bifunctional protein FolD (299 aa).

NADP(+) contacts are provided by residues 168–170 (GRS), Ser-193, and Ile-234.

This sequence belongs to the tetrahydrofolate dehydrogenase/cyclohydrolase family. Homodimer.

The enzyme catalyses (6R)-5,10-methylene-5,6,7,8-tetrahydrofolate + NADP(+) = (6R)-5,10-methenyltetrahydrofolate + NADPH. It catalyses the reaction (6R)-5,10-methenyltetrahydrofolate + H2O = (6R)-10-formyltetrahydrofolate + H(+). The protein operates within one-carbon metabolism; tetrahydrofolate interconversion. Catalyzes the oxidation of 5,10-methylenetetrahydrofolate to 5,10-methenyltetrahydrofolate and then the hydrolysis of 5,10-methenyltetrahydrofolate to 10-formyltetrahydrofolate. The protein is Bifunctional protein FolD of Brucella anthropi (strain ATCC 49188 / DSM 6882 / CCUG 24695 / JCM 21032 / LMG 3331 / NBRC 15819 / NCTC 12168 / Alc 37) (Ochrobactrum anthropi).